The sequence spans 202 residues: Venom allergen 5 (202 aa).

4 disulfide bridges follow: Cys-4–Cys-16, Cys-8–Cys-101, Cys-26–Cys-94, and Cys-168–Cys-185. Residues 46 to 187 (KQHNEFRQKV…WHRHYLVCNY (142 aa)) form the SCP domain.

This sequence belongs to the CRISP family. Venom allergen 5-like subfamily. In terms of tissue distribution, expressed by the venom gland.

It localises to the secreted. This is Venom allergen 5 from Vespa mandarinia (Asian giant hornet).